The chain runs to 83 residues: Sulfur carrier protein TusA (83 aa).

The Cysteine persulfide intermediate role is filled by Cys20.

It belongs to the sulfur carrier protein TusA family.

The protein localises to the cytoplasm. Its function is as follows. Sulfur carrier protein which probably makes part of a sulfur-relay system. The sequence is that of Sulfur carrier protein TusA from Pseudoalteromonas atlantica (strain T6c / ATCC BAA-1087).